The chain runs to 440 residues: D-serine dehydratase (440 aa).

Lysine 116 carries the post-translational modification N6-(pyridoxal phosphate)lysine.

Belongs to the serine/threonine dehydratase family. DsdA subfamily. In terms of assembly, monomer. Requires pyridoxal 5'-phosphate as cofactor.

It carries out the reaction D-serine = pyruvate + NH4(+). In Salmonella typhimurium (strain LT2 / SGSC1412 / ATCC 700720), this protein is D-serine dehydratase.